The following is a 121-amino-acid chain: Cell division protein FtsL (121 aa).

Residues 1 to 34 are Cytoplasmic-facing; the sequence is MISRVTEALSKVKGSIGSNERHALPGVIGDDLLR. The helical transmembrane segment at 35-57 threads the bilayer; that stretch reads FGKLPLCLFICIILTAVTVVTTA. The Periplasmic segment spans residues 58-121; that stretch reads HHTRLLTAQR…PSQENIVVQK (64 aa).

The protein belongs to the FtsL family. In terms of assembly, part of a complex composed of FtsB, FtsL and FtsQ.

The protein resides in the cell inner membrane. In terms of biological role, essential cell division protein. May link together the upstream cell division proteins, which are predominantly cytoplasmic, with the downstream cell division proteins, which are predominantly periplasmic. The chain is Cell division protein FtsL from Salmonella typhimurium (strain LT2 / SGSC1412 / ATCC 700720).